Reading from the N-terminus, the 201-residue chain is Ras-related protein Rab-1B (201 aa).

M1 carries the post-translational modification N-acetylmethionine. Residues S17, G18, V19, G20, K21, S22, C23, Y33, T34, E35, S36, S39, and T40 each coordinate GTP. Position 22 (S22) interacts with Mg(2+). Positions 30–45 (DDTYTESYISTIGVDF) match the Switch 1 motif. Residues T40 and D63 each contribute to the Mg(2+) site. The tract at residues 64 to 83 (TAGQERFRTITSSYYRGAHG) is switch 2 region; required for interaction with REP1/CHM. The short motif at 65 to 80 (AGQERFRTITSSYYRG) is the Switch 2 element. GTP is bound by residues G66, N121, K122, D124, S151, A152, and K153. A disordered region spans residues 174–201 (GPGAASGGERPNLKIDSTPVKPASGGCC). 2 S-geranylgeranyl cysteine lipidation sites follow: C200 and C201. A Cysteine methyl ester modification is found at C201.

Belongs to the small GTPase superfamily. Rab family. Interacts with MICAL1 and MICAL2. Interacts (GTP-bound form) with MICALCL, MICAL1 and MILCAL3. Interacts with GDI1; the interaction requires the GDP-bound state. Interacts with CHM/REP1; the interaction requires the GDP-bound form and is necessary for prenylation by GGTase II. Interacts with RabGAP TBC1D20. Interacts (in GDP-bound form) with lipid phosphatase MTMR6 (via GRAM domain); the interaction regulates MTMR6 recruitment to the endoplasmic reticulum-Golgi intermediate compartment. Interacts (in GDP-bound form) with lipid phosphatase MTMR7. Requires Mg(2+) as cofactor. In terms of processing, prenylated; by GGTase II, only after interaction of the substrate with Rab escort protein 1 (REP1).

It is found in the cytoplasm. It localises to the membrane. The protein localises to the preautophagosomal structure membrane. Its subcellular location is the perinuclear region. It catalyses the reaction GTP + H2O = GDP + phosphate + H(+). Regulated by guanine nucleotide exchange factors (GEFs) which promote the exchange of bound GDP for free GTP. Regulated by GTPase activating proteins (GAPs) including TBC1D20 which increases the GTP hydrolysis activity. Inhibited by GDP dissociation inhibitors (GDIs). Its function is as follows. The small GTPases Rab are key regulators of intracellular membrane trafficking, from the formation of transport vesicles to their fusion with membranes. Rabs cycle between an inactive GDP-bound form and an active GTP-bound form that is able to recruit to membranes different set of downstream effectors directly responsible for vesicle formation, movement, tethering and fusion. Plays a role in the initial events of the autophagic vacuole development which take place at specialized regions of the endoplasmic reticulum. Regulates vesicular transport between the endoplasmic reticulum and successive Golgi compartments. Required to modulate the compacted morphology of the Golgi. Promotes the recruitment of lipid phosphatase MTMR6 to the endoplasmic reticulum-Golgi intermediate compartment. The sequence is that of Ras-related protein Rab-1B (Rab1b) from Mus musculus (Mouse).